An 80-amino-acid polypeptide reads, in one-letter code: Acyl carrier protein (80 aa).

The 76-residue stretch at 4-79 (EAILEKVRSI…DAVKYIEDKQ (76 aa)) folds into the Carrier domain. Position 39 is an O-(pantetheine 4'-phosphoryl)serine (Ser39).

The protein belongs to the acyl carrier protein (ACP) family. In terms of processing, 4'-phosphopantetheine is transferred from CoA to a specific serine of apo-ACP by AcpS. This modification is essential for activity because fatty acids are bound in thioester linkage to the sulfhydryl of the prosthetic group.

It localises to the cytoplasm. It functions in the pathway lipid metabolism; fatty acid biosynthesis. Functionally, carrier of the growing fatty acid chain in fatty acid biosynthesis. This chain is Acyl carrier protein, found in Synechococcus sp. (strain CC9902).